The primary structure comprises 57 residues: Amyloid-beta precursor protein (57 aa).

Over 1–33 the chain is Extracellular; that stretch reads SEVKMDAEFRHDSGYEVHHQKLVFFAEDVGSNK. Cu(2+) contacts are provided by His11, Tyr15, His18, and His19. Zn(2+)-binding residues include His11, Tyr15, His18, and His19. The helical transmembrane segment at 34-57 threads the bilayer; that stretch reads GAIIGLMVGGVVIATVIVITLVML.

Belongs to the APP family. As to quaternary structure, binds, via its C-terminus, to the PID domain of several cytoplasmic proteins, including APBB family members, the APBA family, MAPK8IP1, SHC1 and NUMB and DAB1. Binding to DAB1 inhibits its serine phosphorylation. Interacts (via NPXY motif) with DAB2 (via PID domain); the interaction is impaired by tyrosine phosphorylation of the NPXY motif. Also interacts with GPCR-like protein BPP, APPBP1, IB1, KNS2 (via its TPR domains), APPBP2 (via BaSS) and DDB1. In vitro, it binds MAPT via the MT-binding domains. Associates with microtubules in the presence of ATP and in a kinesin-dependent manner. Interacts, through a C-terminal domain, with GNAO1. Interacts with CPEB1, ANKS1B, TNFRSF21 and AGER. Interacts with ITM2B. Interacts with ITM2C. Interacts with IDE. Can form homodimers; dimerization is enhanced in the presence of Cu(2+) ions. Can form homodimers; this is promoted by heparin binding. Interacts with SORL1 (via N-terminal ectodomain); this interaction retains APP in the trans-Golgi network and reduces processing into soluble APP-alpha and amyloid-beta peptides. Interacts with PLD3. Interacts with VDAC1. Interacts with NSG1; could regulate APP processing. Amyloid-beta protein 42 interacts with FPR2. Interacts with LRRK2. Interacts (via cytoplasmic domain) with KIF5B. Interacts (via C-terminus) with APBB2/FE65L1 (via C-terminus). Interacts (via intracellular domain) with APBB3. In terms of processing, proteolytically processed under normal cellular conditions. Cleavage either by alpha-secretase, beta-secretase or theta-secretase leads to generation and extracellular release of soluble APP peptides, S-APP-alpha and S-APP-beta, and the retention of corresponding membrane-anchored C-terminal fragments, C80, C83 and C99. Subsequent processing of C80 and C83 by gamma-secretase yields P3 peptides. This is the major secretory pathway and is non-amyloidogenic. Alternatively, presenilin/nicastrin-mediated gamma-secretase processing of C99 releases the amyloid-beta proteins, amyloid-beta protein 40 and amyloid-beta protein 42, major components of amyloid plaques, and the cytotoxic C-terminal fragments, gamma-CTF(50), gamma-CTF(57) and gamma-CTF(59). PSEN1 cleavage is more efficient with C83 than with C99 as substrate (in vitro). Amyloid-beta protein 40 and Amyloid-beta protein 42 are cleaved by ACE. Many other minor amyloid-beta peptides, amyloid-beta 1-X peptides, are found in cerebral spinal fluid (CSF) including the amyloid-beta X-15 peptides, produced from the cleavage by alpha-secretase.

The protein resides in the cell membrane. It is found in the membrane. The protein localises to the perikaryon. Its subcellular location is the cell projection. It localises to the growth cone. The protein resides in the clathrin-coated pit. It is found in the early endosome. The protein localises to the cytoplasmic vesicle. Its subcellular location is the secreted. It localises to the cell surface. The protein resides in the nucleus. It is found in the cytoplasm. Its function is as follows. Functions as a cell surface receptor and performs physiological functions on the surface of neurons relevant to neurite growth, neuronal adhesion and axonogenesis. Interaction between APP molecules on neighboring cells promotes synaptogenesis. Involved in cell mobility and transcription regulation through protein-protein interactions. Can promote transcription activation through binding to APBB1-KAT5 and inhibit Notch signaling through interaction with Numb. Couples to apoptosis-inducing pathways such as those mediated by G(o) and JIP. Inhibits G(o)-alpha ATPase activity. Acts as a kinesin I membrane receptor, mediating the axonal transport of beta-secretase and presenilin 1. By acting as a kinesin I membrane receptor, plays a role in axonal anterograde transport of cargo towards synapses in axons. May be involved in copper homeostasis/oxidative stress through copper ion reduction. In vitro, copper-metallated APP induces neuronal death directly or is potentiated through Cu(2+)-mediated low-density lipoprotein oxidation. Can regulate neurite outgrowth through binding to components of the extracellular matrix such as heparin and collagen I and IV. Induces a AGER-dependent pathway that involves activation of p38 MAPK, resulting in internalization of amyloid-beta peptide and mitochondrial dysfunction in cultured cortical neurons. Provides Cu(2+) ions for GPC1 which are required for release of nitric oxide (NO) and subsequent degradation of the heparan sulfate chains on GPC1. This chain is Amyloid-beta precursor protein (APP), found in Ursus maritimus (Polar bear).